A 53-amino-acid polypeptide reads, in one-letter code: ATP synthase protein 8 (53 aa).

Residues 4 to 24 (MAPISWLLLFIIFSITFILFC) form a helical membrane-spanning segment.

The protein belongs to the ATPase protein 8 family. F-type ATPases have 2 components, CF(1) - the catalytic core - and CF(0) - the membrane proton channel.

Its subcellular location is the mitochondrion membrane. In terms of biological role, mitochondrial membrane ATP synthase (F(1)F(0) ATP synthase or Complex V) produces ATP from ADP in the presence of a proton gradient across the membrane which is generated by electron transport complexes of the respiratory chain. F-type ATPases consist of two structural domains, F(1) - containing the extramembraneous catalytic core and F(0) - containing the membrane proton channel, linked together by a central stalk and a peripheral stalk. During catalysis, ATP synthesis in the catalytic domain of F(1) is coupled via a rotary mechanism of the central stalk subunits to proton translocation. Part of the complex F(0) domain. Minor subunit located with subunit a in the membrane. The polypeptide is ATP synthase protein 8 (mt:ATPase8) (Drosophila mauritiana (Fruit fly)).